The primary structure comprises 1108 residues: Isoleucine--tRNA ligase (1108 aa).

The short motif at Pro53–His63 is the 'HIGH' region element. The short motif at Lys654–Arg658 is the 'KMSKS' region element. Lys657 contacts ATP.

This sequence belongs to the class-I aminoacyl-tRNA synthetase family. IleS type 2 subfamily. Monomer. Zn(2+) is required as a cofactor.

It localises to the cytoplasm. It catalyses the reaction tRNA(Ile) + L-isoleucine + ATP = L-isoleucyl-tRNA(Ile) + AMP + diphosphate. Functionally, catalyzes the attachment of isoleucine to tRNA(Ile). As IleRS can inadvertently accommodate and process structurally similar amino acids such as valine, to avoid such errors it has two additional distinct tRNA(Ile)-dependent editing activities. One activity is designated as 'pretransfer' editing and involves the hydrolysis of activated Val-AMP. The other activity is designated 'posttransfer' editing and involves deacylation of mischarged Val-tRNA(Ile). The sequence is that of Isoleucine--tRNA ligase from Rickettsia bellii (strain RML369-C).